The following is a 690-amino-acid chain: Glycine--tRNA ligase beta subunit (690 aa).

The protein belongs to the class-II aminoacyl-tRNA synthetase family. Tetramer of two alpha and two beta subunits.

It localises to the cytoplasm. The catalysed reaction is tRNA(Gly) + glycine + ATP = glycyl-tRNA(Gly) + AMP + diphosphate. The protein is Glycine--tRNA ligase beta subunit of Lactobacillus gasseri (strain ATCC 33323 / DSM 20243 / BCRC 14619 / CIP 102991 / JCM 1131 / KCTC 3163 / NCIMB 11718 / NCTC 13722 / AM63).